A 474-amino-acid polypeptide reads, in one-letter code: Probable aspartate--tRNA ligase, cytoplasmic (474 aa).

Glu-203 provides a ligand contact to L-aspartate. Residues 225 to 228 (QLYK) form an aspartate region. Arg-247 provides a ligand contact to L-aspartate. ATP contacts are provided by residues 247 to 249 (RAE), 255 to 257 (RYL), and Glu-397. L-aspartate is bound by residues Ser-400 and Arg-404. 445 to 448 (GLER) contacts ATP.

It belongs to the class-II aminoacyl-tRNA synthetase family. Type 2 subfamily. As to quaternary structure, homodimer.

Its subcellular location is the cytoplasm. The catalysed reaction is tRNA(Asp) + L-aspartate + ATP = L-aspartyl-tRNA(Asp) + AMP + diphosphate. The protein is Probable aspartate--tRNA ligase, cytoplasmic of Enterocytozoon bieneusi (strain H348) (Microsporidian parasite).